A 340-amino-acid polypeptide reads, in one-letter code: Proline-rich transmembrane protein 2 (340 aa).

The interval 1–261 is disordered; that stretch reads MAASSSEISE…AGPGVEGGEG (261 aa). Over 1–268 the chain is Cytoplasmic; the sequence is MAASSSEISE…GEGTQKPRDY (268 aa). S28 carries the post-translational modification Phosphoserine. T74 carries the post-translational modification Phosphothreonine. Pro residues-rich tracts occupy residues 131-155 and 197-207; these read PPEP…PKPA and APEPHSPPSKK. The residue at position 238 (S238) is a Phosphoserine. R240 bears the Omega-N-methylarginine mark. Residues S248 and S249 each carry the phosphoserine modification. Positions 269–289 form an intramembrane region, helical; it reads IILAILSCFCPMWPVNIVAFA. The Cytoplasmic segment spans residues 290–317; that stretch reads YAVMSRNSLQQGDVDGAQRLGRVAKLLS. Residues 318–338 traverse the membrane as a helical segment; the sequence is IVALVGGVLIIIASCVINLGV. The Extracellular portion of the chain corresponds to 339-340; the sequence is YK.

Belongs to the CD225/Dispanin family. In terms of assembly, component of the outer core of AMPAR complex. AMPAR complex consists of an inner core made of 4 pore-forming GluA/GRIA proteins (GRIA1, GRIA2, GRIA3 and GRIA4) and 4 major auxiliary subunits arranged in a twofold symmetry. One of the two pairs of distinct binding sites is occupied either by CNIH2, CNIH3 or CACNG2, CACNG3. The other harbors CACNG2, CACNG3, CACNG4, CACNG8 or GSG1L. This inner core of AMPAR complex is complemented by outer core constituents binding directly to the GluA/GRIA proteins at sites distinct from the interaction sites of the inner core constituents. Outer core constituents include at least PRRT1, PRRT2, CKAMP44/SHISA9, FRRS1L and NRN1. The proteins of the inner and outer core serve as a platform for other, more peripherally associated AMPAR constituents. Alone or in combination, these auxiliary subunits control the gating and pharmacology of the AMPAR complex and profoundly impact their biogenesis and protein processing. Interacts with intersectin 1/ITSN1. Interacts with SNARE complex components, including SNAP25, STX1A, SYT1 and SYT2; this interaction may inhibit SNARE complex formation.

The protein localises to the cell membrane. The protein resides in the presynaptic cell membrane. It localises to the synapse. It is found in the cell projection. Its subcellular location is the axon. The protein localises to the cytoplasmic vesicle. The protein resides in the secretory vesicle. It localises to the synaptic vesicle membrane. It is found in the postsynaptic density membrane. Its subcellular location is the dendritic spine. Its function is as follows. As a component of the outer core of AMPAR complex, may be involved in synaptic transmission in the central nervous system. In hippocampal neurons, in presynaptic terminals, plays an important role in the final steps of neurotransmitter release, possibly by regulating Ca(2+)-sensing. In the cerebellum, may inhibit SNARE complex formation and down-regulate short-term facilitation. In Pongo abelii (Sumatran orangutan), this protein is Proline-rich transmembrane protein 2 (PRRT2).